A 367-amino-acid polypeptide reads, in one-letter code: Heme A synthase (367 aa).

The next 5 helical transmembrane spans lie at 25 to 45, 111 to 131, 139 to 159, 174 to 194, and 210 to 230; these read ALRLWLGFVLLALFCLVLVGG, LIARGIGVIFALPLIFFWLTG, WPLVGILALGGLQGFIGWWMV, LATHLVMACLIFAGCMWIMRG, and GFAAAIAIFALFQIYLGALVA. His-274 is a heme binding site. The next 3 membrane-spanning stretches (helical) occupy residues 276 to 296, 305 to 325, and 327 to 347; these read IGAYTLFALTLINMVIALRAA, AVVLFSLVTLQAAIGIATLLM, and VPLHWGLLHQAGALVVFGFAV. His-335 serves as a coordination point for heme.

Belongs to the COX15/CtaA family. Type 2 subfamily. In terms of assembly, interacts with CtaB. The cofactor is heme b.

The protein resides in the cell membrane. The enzyme catalyses Fe(II)-heme o + 2 A + H2O = Fe(II)-heme a + 2 AH2. The protein operates within porphyrin-containing compound metabolism; heme A biosynthesis; heme A from heme O: step 1/1. Its function is as follows. Catalyzes the conversion of heme O to heme A by two successive hydroxylations of the methyl group at C8. The first hydroxylation forms heme I, the second hydroxylation results in an unstable dihydroxymethyl group, which spontaneously dehydrates, resulting in the formyl group of heme A. This is Heme A synthase from Rhizobium etli (strain CIAT 652).